A 151-amino-acid chain; its full sequence is Ribosome maturation factor RimP (151 aa).

Belongs to the RimP family.

It localises to the cytoplasm. Required for maturation of 30S ribosomal subunits. The protein is Ribosome maturation factor RimP of Shewanella sp. (strain MR-4).